A 311-amino-acid polypeptide reads, in one-letter code: 3'(2'),5'-bisphosphate nucleotidase 1 (311 aa).

The active-site Proton acceptor is Asp-49. Mg(2+)-binding residues include Glu-72, Asp-116, Leu-118, and Asp-119. The active-site Proton acceptor is the Thr-121. Positions 202, 205, 227, and 231 each coordinate AMP. Asp-254 lines the Mg(2+) pocket.

Belongs to the inositol monophosphatase superfamily. It depends on Mg(2+) as a cofactor.

The catalysed reaction is adenosine 3',5'-bisphosphate + H2O = AMP + phosphate. It carries out the reaction adenosine 2',5'-bisphosphate + H2O = AMP + phosphate. It catalyses the reaction 3'-phosphoadenylyl sulfate + H2O = adenosine 5'-phosphosulfate + phosphate. The enzyme catalyses 1D-myo-inositol 1,4-bisphosphate + H2O = 1D-myo-inositol 4-phosphate + phosphate. The catalysed reaction is 1D-myo-inositol 1,3,4-trisphosphate + H2O = 1D-myo-inositol 3,4-bisphosphate + phosphate. Inhibited by Li(+) and Ca(2+), but not by Na(+). In terms of biological role, phosphatase that converts 3'(2')-phosphoadenosine 5'-phosphate (PAP) to AMP and adenosine 3'-phosphate 5'-phosphosulfate (PAPS) to adenosine 5'-phosphosulfate (APS). Is also able to hydrolyze inositol 1,4-bisphosphate (Ins(1,4)P2) and inositol 1,3,4-trisphosphate (Ins(1,3,4)P3), but is not active on AMP, 3'-AMP, fructose-1,6-bisphosphate, Ins(1)P, Ins(2)P and Ins(1,4,5)P3. Probably prevents the toxic accumulation of PAP, a compound which inhibits a variety of proteins, including PAPS-utilizing enzymes such as sulfotransferases, and RNA processing enzymes. Could also play a role in inositol recycling and phosphoinositide metabolism. The protein is 3'(2'),5'-bisphosphate nucleotidase 1 (bpnt1) of Dictyostelium discoideum (Social amoeba).